Here is a 311-residue protein sequence, read N- to C-terminus: MSENQQTNQKEQYNLNKLQKRLRRNVGEAIADFNMIEEGDRIMVCLSGGKDSFTMLEILRNLQQSAPINFSLVAVNLDQKQPGFPEHILPQYLDNIGVEYKIVEENTYGIVKDKIPEGKTTCSLCSRLRRGILYRTATELGATKIALGHHRDDILQTLFLNMFYGGKLKGMPPKLMSDDGKHIVIRPLAYCREKDIERFAEARQYPIIPCNLCGSQPNLQRQVIKDMLRDWDKRHPGRIETMFSAMQNVVPSHLADHALFDFKNIRHGSDVVDGGDLAFDREELPLQPAGWQPEEDDDASPITRLDVLEIK.

A PP-loop motif motif is present at residues 47-52 (SGGKDS). Residues cysteine 122, cysteine 125, and cysteine 213 each contribute to the [4Fe-4S] cluster site.

Belongs to the TtcA family. Homodimer. Mg(2+) serves as cofactor. The cofactor is [4Fe-4S] cluster.

It is found in the cytoplasm. The enzyme catalyses cytidine(32) in tRNA + S-sulfanyl-L-cysteinyl-[cysteine desulfurase] + AH2 + ATP = 2-thiocytidine(32) in tRNA + L-cysteinyl-[cysteine desulfurase] + A + AMP + diphosphate + H(+). It functions in the pathway tRNA modification. Catalyzes the ATP-dependent 2-thiolation of cytidine in position 32 of tRNA, to form 2-thiocytidine (s(2)C32). The sulfur atoms are provided by the cysteine/cysteine desulfurase (IscS) system. In Pectobacterium atrosepticum (strain SCRI 1043 / ATCC BAA-672) (Erwinia carotovora subsp. atroseptica), this protein is tRNA-cytidine(32) 2-sulfurtransferase.